The following is a 252-amino-acid chain: Protein PYRAB15930 (252 aa).

The protein belongs to the CinA family.

This chain is Protein PYRAB15930, found in Pyrococcus abyssi (strain GE5 / Orsay).